The chain runs to 177 residues: Peptidyl-tRNA hydrolase (177 aa).

TRNA is bound at residue Y12. Catalysis depends on H17, which acts as the Proton acceptor. The tRNA site is built by F63, N65, and N111.

The protein belongs to the PTH family. Monomer.

The protein resides in the cytoplasm. It carries out the reaction an N-acyl-L-alpha-aminoacyl-tRNA + H2O = an N-acyl-L-amino acid + a tRNA + H(+). In terms of biological role, hydrolyzes ribosome-free peptidyl-tRNAs (with 1 or more amino acids incorporated), which drop off the ribosome during protein synthesis, or as a result of ribosome stalling. Functionally, catalyzes the release of premature peptidyl moieties from peptidyl-tRNA molecules trapped in stalled 50S ribosomal subunits, and thus maintains levels of free tRNAs and 50S ribosomes. The polypeptide is Peptidyl-tRNA hydrolase (Buchnera aphidicola subsp. Acyrthosiphon pisum (strain 5A)).